A 459-amino-acid chain; its full sequence is ADP-specific phosphofructokinase (459 aa).

In terms of domain architecture, ADPK spans 1 to 457 (MMEFLKDFQK…FASYLSLLKR (457 aa)). Mg(2+) is bound by residues E268, E298, and D441. Residue D441 is the Proton acceptor of the active site.

This sequence belongs to the carbohydrate kinase PfkC family. Mg(2+) serves as cofactor.

Its subcellular location is the cytoplasm. The catalysed reaction is beta-D-fructose 6-phosphate + ADP = beta-D-fructose 1,6-bisphosphate + AMP + H(+). It participates in carbohydrate degradation; glycolysis. Functionally, catalyzes the phosphorylation of fructose 6-phosphate to fructose 1,6-bisphosphate using ADP as the phosphate donor. The protein is ADP-specific phosphofructokinase of Thermococcus litoralis.